Consider the following 1138-residue polypeptide: MALDTPSSDLPVSTDDTAEHQPTPAHRPPSAADRRSVDLLEKIRRPRGFGAGAPKIAGTVVGVLAGIALLSSIFPLFRRLIHYPRDFIDNYIVSLPNTSLAWAFVLALVAIALSSRKRIAWWIATIYLVLFMVSNALLLVDPVATDFGVDTDERIQIWIGLGIDAAALIFLIVTYRQFYTRVRRGALFRALGVLIVGLTAATLVGWGLVWAWPGSLERTERLPYAFNRVVTFGSIDSRTFDGHHTHIVIDSALGLLGALALIAAATVLFRSQRLESLMTSDDEKLIRALITRFNDDDSLAYFSTRRDKAVVFSPDGRAAITYRVEIGVGLAGGDPIGDPESWPDAIAEFLTLCDRYGWHPAAMGSSARGAAAYDAAGFGSLSIGDEAILHTREYTISGPAMKAVRQAVTRTRRAGVTVRIRRHGEVPDDEMPQVIARADAWRDTDEERGFAMALSRLGDRADDDCLLVEAVEHAGTPEEKVIGMLSFVPWGRRGVSLDVMRRDRGSVNGVVETMVTELCRNSEQFGITEISLNFATFRAFFEQGPQIGAGPIMRLGYSVLMFGSRFFQMESLYKSNAKYLPDWQPRFLCFEDNRILPRVGLAAIVTEGFVQLPRFGRKQHYIAGQSSIPAGVDADALIAQLESEEDRTAVEVHRPEQVRVRVAKLDRLIEEGFDPYPPADAPTHTIAEAIAEPEGTQVTIAGRVTKMRDFGKVTFADVHDWSGQIQMLVEASRVIPGTPDFGSDVDLGDLVEARGVIGRSRSGELSVLIDAWRFNGKCLRPLPDKWSGLTDPEARVRQRYVDLAINPRSRELLATRSVVVKALRDFLADRGFMEVETPILQQIHGGANATPFQTHINAYNLDLYLRIAPELYLKRLCVGGVEKVFEIGRNFRNEGVDFSHNPEFTSLEAYAAHSDYLKMLDLTREMIQHAATAAHGEPVIIRVDDEGNEQRVDISGDWPVRTVHEVVSEGAGVEITSDTEVSELRGICDRLEIAYRPDWDAGQIVLELYEHLGEDRTTVPTFYTDFPTSTSPLTRAHRSKPGVAERWDLVAWGVELGTAYTELTDPVEQRKRLTAQSILAADGDPEAMELDEDFLTALEYAMPPTGGLGVGVDRVVMLITGQSIRESLAFPMVKPTDA.

The span at 1–15 (MALDTPSSDLPVSTD) shows a compositional bias: polar residues. The disordered stretch occupies residues 1-34 (MALDTPSSDLPVSTDDTAEHQPTPAHRPPSAADR). The tract at residues 1–646 (MALDTPSSDL…LIAQLESEED (646 aa)) is phosphatidylglycerol lysyltransferase. Helical transmembrane passes span 56 to 76 (IAGT…IFPL), 92 to 112 (IVSL…VAIA), 119 to 139 (IAWW…ALLL), 155 to 175 (IQIW…IVTY), 190 to 210 (ALGV…GLVW), and 247 to 267 (IVID…AATV). A lysine--tRNA ligase region spans residues 647 to 1138 (RTAVEVHRPE…AFPMVKPTDA (492 aa)). The OB DNA-binding region spans 698–772 (VTIAGRVTKM…GELSVLIDAW (75 aa)). Aspartate 1048 and glutamate 1055 together coordinate Mg(2+).

In the N-terminal section; belongs to the LPG synthetase family. This sequence in the C-terminal section; belongs to the class-II aminoacyl-tRNA synthetase family. It depends on Mg(2+) as a cofactor.

The protein localises to the cell membrane. It catalyses the reaction tRNA(Lys) + L-lysine + ATP = L-lysyl-tRNA(Lys) + AMP + diphosphate. It carries out the reaction L-lysyl-tRNA(Lys) + a 1,2-diacyl-sn-glycero-3-phospho-(1'-sn-glycerol) = a 1,2-diacyl-sn-glycero-3-phospho-1'-(3'-O-L-lysyl)-sn-glycerol + tRNA(Lys). Functionally, catalyzes the production of L-lysyl-tRNA(Lys)transfer and the transfer of a lysyl group from L-lysyl-tRNA(Lys) to membrane-bound phosphatidylglycerol (PG), which produces lysylphosphatidylglycerol (LPG), one of the components of the bacterial membrane with a positive net charge. LPG synthesis contributes to the resistance to cationic antimicrobial peptides (CAMPs) and likely protects M.tuberculosis against the CAMPs produced by competiting microorganisms (bacteriocins). In fact, the modification of anionic phosphatidylglycerol with positively charged L-lysine results in repulsion of the peptides. In Gordonia bronchialis (strain ATCC 25592 / DSM 43247 / BCRC 13721 / JCM 3198 / KCTC 3076 / NBRC 16047 / NCTC 10667) (Rhodococcus bronchialis), this protein is Lysylphosphatidylglycerol biosynthesis bifunctional protein LysX (lysX).